Here is a 125-residue protein sequence, read N- to C-terminus: Small ribosomal subunit protein uS12 (125 aa).

Residues 9-31 (RQGREVEKIKSKSPAMENSPQRR) are disordered. Asp-89 bears the 3-methylthioaspartic acid mark. Residues 105 to 125 (QGVKDRKQSRSKYGAKRPKAK) are disordered. Over residues 113 to 125 (SRSKYGAKRPKAK) the composition is skewed to basic residues.

Belongs to the universal ribosomal protein uS12 family. As to quaternary structure, part of the 30S ribosomal subunit. Contacts proteins S8 and S17. May interact with IF1 in the 30S initiation complex.

Functionally, with S4 and S5 plays an important role in translational accuracy. In terms of biological role, interacts with and stabilizes bases of the 16S rRNA that are involved in tRNA selection in the A site and with the mRNA backbone. Located at the interface of the 30S and 50S subunits, it traverses the body of the 30S subunit contacting proteins on the other side and probably holding the rRNA structure together. The combined cluster of proteins S8, S12 and S17 appears to hold together the shoulder and platform of the 30S subunit. In Polaromonas naphthalenivorans (strain CJ2), this protein is Small ribosomal subunit protein uS12.